A 429-amino-acid chain; its full sequence is 3-phosphoshikimate 1-carboxyvinyltransferase (429 aa).

3-phosphoshikimate-binding residues include Lys-11, Ser-12, and Arg-16. Residue Lys-11 participates in phosphoenolpyruvate binding. Gly-82 and Arg-110 together coordinate phosphoenolpyruvate. Positions 155, 157, 302, and 329 each coordinate 3-phosphoshikimate. Residue Gln-157 coordinates phosphoenolpyruvate. Asp-302 functions as the Proton acceptor in the catalytic mechanism. Residues Arg-333 and Arg-385 each contribute to the phosphoenolpyruvate site.

It belongs to the EPSP synthase family. As to quaternary structure, monomer.

The protein localises to the cytoplasm. It catalyses the reaction 3-phosphoshikimate + phosphoenolpyruvate = 5-O-(1-carboxyvinyl)-3-phosphoshikimate + phosphate. The protein operates within metabolic intermediate biosynthesis; chorismate biosynthesis; chorismate from D-erythrose 4-phosphate and phosphoenolpyruvate: step 6/7. Catalyzes the transfer of the enolpyruvyl moiety of phosphoenolpyruvate (PEP) to the 5-hydroxyl of shikimate-3-phosphate (S3P) to produce enolpyruvyl shikimate-3-phosphate and inorganic phosphate. The protein is 3-phosphoshikimate 1-carboxyvinyltransferase of Helicobacter acinonychis (strain Sheeba).